A 511-amino-acid polypeptide reads, in one-letter code: Centrosomal protein CCDC61 (511 aa).

Position 1 is an N-acetylmethionine (methionine 1). Positions 1–143 are head domain; it reads MDQPAGLQVD…PLPLPYQGKP (143 aa). Coiled coils occupy residues 176-203 and 246-273; these read IWHLREQVTRLTSEKRELEAQLGRSREE and SRRLAKELEEVKASERNLRARLKTLNSE. At threonine 283 the chain carries Phosphothreonine. Disordered regions lie at residues 284–413 and 429–476; these read LPPV…DSFR and SHSV…GGWV. The segment covering 290–302 has biased composition (basic and acidic residues); the sequence is REGRASSSRERST. A phosphoserine mark is found at serine 330 and serine 332. Residues 360 to 369 show a composition bias toward low complexity; it reads KQQQQQRNRM. Phosphoserine occurs at positions 371 and 374. The span at 433–442 shows a compositional bias: basic residues; the sequence is SRSRRCRGRG. Position 446 is a phosphoserine (serine 446). The span at 449–458 shows a compositional bias: polar residues; that stretch reads PWSRSKTKST. Phosphoserine is present on serine 472.

The protein belongs to the CCDC61 family. As to quaternary structure, forms homodimers (via head domain). Interacts with CEP170. Interacts with PCM1 and CEP131. Binds tubulin.

It localises to the cytoplasm. Its subcellular location is the cytoskeleton. The protein localises to the microtubule organizing center. It is found in the centrosome. The protein resides in the centriolar satellite. It localises to the cilium basal body. Functionally, microtubule-binding centrosomal protein required for centriole cohesion, independently of the centrosome-associated protein/CEP250 and rootletin/CROCC linker. In interphase, required for anchoring microtubule at the mother centriole subdistal appendages and for centrosome positioning. During mitosis, may be involved in spindle assembly and chromatin alignment by regulating the organization of spindle microtubules into a symmetrical structure. Plays a non-essential role in ciliogenesis. The protein is Centrosomal protein CCDC61 of Mus musculus (Mouse).